Here is a 766-residue protein sequence, read N- to C-terminus: Disabled homolog 2 (766 aa).

Residues 1 to 16 show a composition bias toward polar residues; sequence MSNEVETSTTNGQPDQ. The tract at residues 1-36 is disordered; it reads MSNEVETSTTNGQPDQQAAPKAPSKKEKKKGSEKTD. S2 is subject to N-acetylserine. Position 2 is a phosphoserine (S2). The PID domain occupies 45–196; the sequence is GDGVKYKAKL…KAEENGSEAL (152 aa). Y170 bears the Phosphotyrosine mark. Residue S193 is modified to Phosphoserine. Residues 230–447 are required for localization to clathrin-coated pits; sequence ESKDILLVDL…KPGRGRRTAK (218 aa). Disordered regions lie at residues 284–482, 596–630, 659–683, and 699–766; these read LNFF…NFLD, PPPTMSTQSSPQPMMSSVLATPPQPPPRNGPLKDI, RQPPLVPSRKGETPPSGTSSAFSSY, and DFDA…NPFA. Short sequence motifs (DPF) lie at residues 293-295 and 298-300; these read DPF. 2 stretches are compositionally biased toward polar residues: residues 303–334 and 367–381; these read PDQSAPSSFDSLTSPDQKKASLSSSSTPQSKG and PSSQTQQAVRTQNGV. The residue at position 323 (S323) is a Phosphoserine. Phosphoserine; in mitosis is present on residues S326 and S328. At S401 the chain carries Phosphoserine. The segment covering 467–480 has biased composition (polar residues); sequence MSPTGQPAVPQSNF. Positions 600–612 are enriched in low complexity; the sequence is MSTQSSPQPMMSS. Residues 600–730 form a sufficient for interaction with GRB2 region; that stretch reads MSTQSSPQPM…VLLGTKSADN (131 aa). The interval 617-625 is required for interaction with CSK; sequence PPQPPPRNG. The segment at 647 to 766 is required for interaction with MYO6; that stretch reads KEVKEMFKDF…HRSPFGNPFA (120 aa). A required for interaction with GRB2 and CSK region spans residues 661-669; the sequence is PPLVPSRKG. T671 bears the Phosphothreonine mark. Polar residues predominate over residues 673 to 683; the sequence is PSGTSSAFSSY. Residues 707 to 723 are sufficient for interaction with SH3KBP1 SH3 domain; it reads NKINEPPKPAPRQGVLL. S727 and S759 each carry phosphoserine. The span at 727–753 shows a compositional bias: polar residues; sequence SADNSLENPFSKGFSSSNPSVVSQPAS.

In terms of assembly, interacts (via NPXY motif) with DAB2 (via PID domain). Can interact (via PID domain) with LDLR, APP, APLP1 and APLP2, and weakly with INPP5D (via NPXY motifs); the interaction is impaired by tyrosine phosphorylation of the respective NPXY motifs. Can weakly interact (via PID domain) with LRP1 (via NPXY motif); the interaction is enhanced by tyrosine phosphorylation of the NPXY motif. Interacts with LRP2 (via NPXY motif); the interaction is not affected by tyrosine phosphorylation of the NPXY motif. Interacts with clathrin; in vitro can assemble clathrin triskelia into polyhedral coats. Interacts with AP2A2, ITGB1, ITGB3, ITGB5, PIAS2, DAB2IP, NOSTRIN, FCHO1, DVL3 and EPS15L1. Interacts with SH3KBP1 (via SH3 domains). Interacts with GRB2; competes with SOS1 for binding to GRB2 and the interaction is enhanced by EGF and NT-3 stimulation. Isoform p96 interacts with EPS15 and ITSN1; isoform p67 does not interact with EPS15 and only weakly interacts with ITSN1. Interacts with MAP3K7; the interaction is induced by TGF-beta stimulation and may mediate TGF-beta stimulated JNK activation. Interacts with AXIN1 and PPP1CA; the interactions are mutually exclusive. Interacts with the globular tail of MYO6. Interacts (via DPF motifs) with FCHO2; the interaction is direct and required for DAB2-mediated LDLR endocytosis. Interacts with LRP6; the interaction involves LRP6 phosphorylation by CK2 and sequesters LRP6 towards clathrin-mediated endocytosis. Associates with the TGF-beta receptor complex. Interacts with SMAD2 and SMAD3; the interactions are enhanced upon TGF-beta stimulation. Interacts with GRB2; the interaction is enhanced by EGF and NT-3 stimulation. Interacts with SRC; the interaction is enhanced by EGF stimulation. Phosphorylated on serine residues in response to mitogenic growth-factor stimulation. Phosphorylation during mitosis is leading to membrane displacement. Isoform p96 and isoform p67 are expressed in adult kidney and fibroblasts with isoform p96 being the predominant form. Isoform p67 is the predominant isoform expressed in embryonic visceral endoderm.

The protein resides in the cytoplasmic vesicle. Its subcellular location is the clathrin-coated vesicle membrane. It localises to the membrane. The protein localises to the clathrin-coated pit. It is found in the cytoplasm. The protein resides in the nucleus. In terms of biological role, adapter protein that functions as a clathrin-associated sorting protein (CLASP) required for clathrin-mediated endocytosis of selected cargo proteins. Can bind and assemble clathrin, and binds simultaneously to phosphatidylinositol 4,5-bisphosphate (PtdIns(4,5)P2) and cargos containing non-phosphorylated NPXY internalization motifs, such as the LDL receptor, to recruit them to clathrin-coated pits. Can function in clathrin-mediated endocytosis independently of the AP-2 complex. Involved in endocytosis of integrin beta-1; this function seems to redundant with the AP-2 complex and seems to require DAB2 binding to endocytosis accessory EH domain-containing proteins such as EPS15, EPS15L1 and ITSN1. Involved in endocytosis of cystic fibrosis transmembrane conductance regulator/CFTR. Isoform p96 is involved in endocytosis of megalin/LRP2 lipoprotein receptor during embryonal development. Required for recycling of the TGF-beta receptor. Isoform p67 is not involved in LDL receptor endocytosis. Involved in CFTR trafficking to the late endosome. Involved in several receptor-mediated signaling pathways. Involved in TGF-beta receptor signaling and facilitates phosphorylation of the signal transducer SMAD2. Mediates TFG-beta-stimulated JNK activation. May inhibit the canoniocal Wnt/beta-catenin signaling pathway by stabilizing the beta-catenin destruction complex through a competing association with axin preventing its dephosphorylation through protein phosphatase 1 (PP1). Sequesters LRP6 towards clathrin-mediated endocytosis, leading to inhibition of Wnt/beta-catenin signaling. May activate non-canonical Wnt signaling. In cell surface growth factor/Ras signaling pathways proposed to inhibit ERK activation by interrupting the binding of GRB2 to SOS1 and to inhibit SRC by preventing its activating phosphorylation at 'Tyr-419'. Proposed to be involved in modulation of androgen receptor (AR) signaling mediated by SRC activation; seems to compete with AR for interaction with SRC. Plays a role in the CSF-1 signal transduction pathway. Plays a role in cellular differentiation. Involved in cell positioning and formation of visceral endoderm (VE) during embryogenesis and proposed to be required in the VE to respond to Nodal signaling coming from the epiblast. Required for the epithelial to mesenchymal transition, a process necessary for proper embryonic development. May be involved in myeloid cell differentiation and can induce macrophage adhesion and spreading. Isoform p67 may be involved in transcriptional regulation. May act as a tumor suppressor. This is Disabled homolog 2 (Dab2) from Mus musculus (Mouse).